The following is a 159-amino-acid chain: Protein B1 (159 aa).

Residues 1 to 15 (MQKNMKTKKTKKRGR) are compositionally biased toward basic residues. Disordered regions lie at residues 1–100 (MQKN…RTRE) and 133–159 (PGHGPHASLRSHLRARSALRPPPDPPR). The span at 16 to 31 (KEGNTPETERRMEPAR) shows a compositional bias: basic and acidic residues. Basic residues predominate over residues 85–96 (RGRHIHTRGART).

The chain is Protein B1 (B1) from Human herpesvirus 6B (strain Z29) (HHV-6 variant B).